Consider the following 211-residue polypeptide: MPNLLHVDASLAQEGSTSRSLAATYIDAWRAAHPDGTVTYRDLALTPPPHLDWATLSAAFTPPEQHTPEQTEGVKLREELIGELEAADELLLSLPMYNYSVPSTFKAWVDQVILVGRTLQQPPAESVLTGDRVTVIATQGGSYGVGTPKEGWDHQLPFIAHVLESLGATDVELVRVEMTLAPVNPALADFTDVYERSRAAGESALRARAAA.

FMN is bound by residues S10, 16-18 (STS), and 138-141 (TQGG).

Belongs to the azoreductase type 1 family. Homodimer. It depends on FMN as a cofactor.

It carries out the reaction 2 a quinone + NADH + H(+) = 2 a 1,4-benzosemiquinone + NAD(+). The enzyme catalyses N,N-dimethyl-1,4-phenylenediamine + anthranilate + 2 NAD(+) = 2-(4-dimethylaminophenyl)diazenylbenzoate + 2 NADH + 2 H(+). Functionally, quinone reductase that provides resistance to thiol-specific stress caused by electrophilic quinones. In terms of biological role, also exhibits azoreductase activity. Catalyzes the reductive cleavage of the azo bond in aromatic azo compounds to the corresponding amines. In Frankia alni (strain DSM 45986 / CECT 9034 / ACN14a), this protein is FMN-dependent NADH:quinone oxidoreductase.